We begin with the raw amino-acid sequence, 346 residues long: Phosphoribosylformylglycinamidine cyclo-ligase (346 aa).

Belongs to the AIR synthase family.

It is found in the cytoplasm. It carries out the reaction 2-formamido-N(1)-(5-O-phospho-beta-D-ribosyl)acetamidine + ATP = 5-amino-1-(5-phospho-beta-D-ribosyl)imidazole + ADP + phosphate + H(+). Its pathway is purine metabolism; IMP biosynthesis via de novo pathway; 5-amino-1-(5-phospho-D-ribosyl)imidazole from N(2)-formyl-N(1)-(5-phospho-D-ribosyl)glycinamide: step 2/2. The chain is Phosphoribosylformylglycinamidine cyclo-ligase from Polaromonas sp. (strain JS666 / ATCC BAA-500).